A 445-amino-acid chain; its full sequence is Methylphloroacetophenone oxidase (445 aa).

Residues 25 to 45 (VLSIALIGVACAISIRSILYV) traverse the membrane as a helical segment. Asn51 carries an N-linked (GlcNAc...) asparagine glycan.

This sequence belongs to the cytochrome P450 family.

It localises to the membrane. It functions in the pathway secondary metabolite biosynthesis. In terms of biological role, methylphloroacetophenone oxidase; part of the gene cluster that mediates the biosynthesis of usnic acid, a dibenzofuran lichen product possessing a broad spectrum of biological activities. Two genes, mpas and mpao, comprise the usnic acid biosynthetic gene cluster with a single post-PKS enzyme, the methylphloracetophenone oxidase (mpao). The methylphloroacetophenone synthase (mpas) is a non-reducing polyketide synthase that produces methylphloracetophenone from acetate via a methylated tetraketide intermediate. The methylphloroacetophenone oxidase then carries out the oxidative dimerization of methylphloracetophenone to usnic acid. This chain is Methylphloroacetophenone oxidase, found in Cladonia uncialis (Cup lichen).